Reading from the N-terminus, the 95-residue chain is Co-chaperonin GroES (95 aa).

The protein belongs to the GroES chaperonin family. As to quaternary structure, heptamer of 7 subunits arranged in a ring. Interacts with the chaperonin GroEL.

The protein resides in the cytoplasm. Together with the chaperonin GroEL, plays an essential role in assisting protein folding. The GroEL-GroES system forms a nano-cage that allows encapsulation of the non-native substrate proteins and provides a physical environment optimized to promote and accelerate protein folding. GroES binds to the apical surface of the GroEL ring, thereby capping the opening of the GroEL channel. The polypeptide is Co-chaperonin GroES (Francisella philomiragia subsp. philomiragia (strain ATCC 25017 / CCUG 19701 / FSC 153 / O#319-036)).